The chain runs to 487 residues: Serine/threonine-protein kinase 4 (487 aa).

An N-acetylmethionine modification is found at M1. T3 is modified (phosphothreonine). The region spanning 30–281 (FDVLEKLGEG…ATQLLQHPFV (252 aa)) is the Protein kinase domain. Residues 36-44 (LGEGSYGSV) and K59 contribute to the ATP site. The Proton acceptor role is filled by D149. T183 bears the Phosphothreonine; by autocatalysis mark. Phosphoserine is present on S265. A coiled-coil region spans residues 290 to 310 (LRDLINEAMDVKLKRQESQQR). The span at 303–312 (KRQESQQREV) shows a compositional bias: basic and acidic residues. A disordered region spans residues 303-332 (KRQESQQREVDQDDEENSEEDEMDSGTMVR). Acidic residues predominate over residues 313 to 326 (DQDDEENSEEDEMD). Residue S320 is modified to Phosphoserine. Residues T340 and T367 each carry the phosphothreonine modification. At T387 the chain carries Phosphothreonine; by PKB/AKT1. S410 and S414 each carry phosphoserine. At Y433 the chain carries Phosphotyrosine. The SARAH domain maps to 433-480 (YEFLKSWTVEDLQKRLLALDPMMEQEIEEIRQKYQSKRQPILDAIEAK).

This sequence belongs to the protein kinase superfamily. STE Ser/Thr protein kinase family. STE20 subfamily. In terms of assembly, homodimer; mediated via the coiled-coil region. Interacts with NORE1, which inhibits autoactivation. Interacts with and stabilizes SAV1. Interacts with RASSF1. Interacts with FOXO3. Interacts with RASSF2 (via SARAH domain). Interacts with AR, PKB/AKT1, TNNI3 and SIRT1. Interacts with DLG5 (via PDZ domain 3). Interacts with MARK3 and SCRIB in the presence of DLG5. It depends on Mg(2+) as a cofactor. Autophosphorylated on serine and threonine residues. Phosphorylation at Thr-387 by PKB/AKT1, leads to inhibition of its: kinase activity, nuclear translocation and autophosphorylation at Thr-183. It also diminishes its cleavage by caspases and its ability to phosphorylate FOXO3. In terms of processing, proteolytically cleaved by caspase-3 during apoptosis at Asp-326 and Asp-349 resulting in a 37 kDa or a 39 kDa subunit respectively. The 39 kDa subunit is further cleaved into the 37 kDa form. Proteolytic cleavage results in kinase activation and nuclear translocation of the truncated form (MST1/N). It is less likely that cleavage at Asp-349 is a prerequisite for activation as this site is not conserved in the murine ortholog.

The protein localises to the cytoplasm. It is found in the nucleus. It catalyses the reaction L-seryl-[protein] + ATP = O-phospho-L-seryl-[protein] + ADP + H(+). The enzyme catalyses L-threonyl-[protein] + ATP = O-phospho-L-threonyl-[protein] + ADP + H(+). Inhibited by the C-terminal non-catalytic region. Activated by caspase-cleavage. Full activation also requires homodimerization and autophosphorylation of Thr-183. Activated by RASSF1 which acts by preventing its dephosphorylation. Stress-activated, pro-apoptotic kinase which, following caspase-cleavage, enters the nucleus and induces chromatin condensation followed by internucleosomal DNA fragmentation. Key component of the Hippo signaling pathway which plays a pivotal role in organ size control and tumor suppression by restricting proliferation and promoting apoptosis. The core of this pathway is composed of a kinase cascade wherein STK3/MST2 and STK4/MST1, in complex with its regulatory protein SAV1, phosphorylates and activates LATS1/2 in complex with its regulatory protein MOB1, which in turn phosphorylates and inactivates YAP1 oncoprotein and WWTR1/TAZ. Phosphorylation of YAP1 by LATS2 inhibits its translocation into the nucleus to regulate cellular genes important for cell proliferation, cell death, and cell migration. STK3/MST2 and STK4/MST1 are required to repress proliferation of mature hepatocytes, to prevent activation of facultative adult liver stem cells (oval cells), and to inhibit tumor formation. Phosphorylates 'Ser-14' of histone H2B (H2BS14ph) during apoptosis. Phosphorylates FOXO3 upon oxidative stress, which results in its nuclear translocation and cell death initiation. Phosphorylates MOBKL1A, MOBKL1B and RASSF2. Phosphorylates TNNI3 (cardiac Tn-I) and alters its binding affinity to TNNC1 (cardiac Tn-C) and TNNT2 (cardiac Tn-T). Phosphorylates FOXO1 on 'Ser-212' and regulates its activation and stimulates transcription of PMAIP1 in a FOXO1-dependent manner. Phosphorylates SIRT1 and inhibits SIRT1-mediated p53/TP53 deacetylation, thereby promoting p53/TP53 dependent transcription and apoptosis upon DNA damage. Acts as an inhibitor of PKB/AKT1. Phosphorylates AR on 'Ser-650' and suppresses its activity by intersecting with PKB/AKT1 signaling and antagonizing formation of AR-chromatin complexes. This is Serine/threonine-protein kinase 4 (STK4) from Papio anubis (Olive baboon).